Here is a 354-residue protein sequence, read N- to C-terminus: MLSNLRILLNNAALRKGHTSVVRHFWCGKPVQSQVQLKGRDLLTLKNFTGEEIQYMLWLSADLKFRIKQKGEYLPLLQGKSLGMIFEKRSTRTRLSTETGFALLGGHPSFLTTQDIHLGVNESLTDTARVLSSMTDAVLARVYKQSDLDTLAKEASIPIVNGLSDLYHPIQILADYLTLQEHYGSLKGLTLSWIGDGNNILHSIMMSAAKFGMHLQAATPKGYEPDPNIVKLAEQYAKENGTKLSMTNDPLEAARGGNVLITDTWISMGQEDEKKKRLQAFQGYQVTMKTAKVAASDWTFLHCLPRKPEEVDDEVFYSPRSLVFPEAENRKWTIMAVMVSLLTDYSPVLQKPKF.

Residues 1–32 (MLSNLRILLNNAALRKGHTSVVRHFWCGKPVQ) constitute a mitochondrion transit peptide. Lysine 70 is subject to N6-acetyllysine; alternate. Lysine 70 carries the N6-succinyllysine; alternate modification. N6-succinyllysine is present on lysine 80. Lysine 88 carries the post-translational modification N6-acetyllysine; alternate. Lysine 88 bears the N6-succinyllysine; alternate mark. 90 to 94 (STRTR) lines the carbamoyl phosphate pocket. Residue serine 133 is modified to Phosphoserine. Residue arginine 141 coordinates carbamoyl phosphate. Arginine 141 is an L-ornithine binding site. Lysine 144 is subject to N6-acetyllysine; alternate. N6-succinyllysine; alternate is present on lysine 144. A carbamoyl phosphate-binding site is contributed by histidine 168. Asparagine 199 is a binding site for L-ornithine. N6-acetyllysine; alternate is present on residues lysine 221, lysine 231, and lysine 238. N6-succinyllysine; alternate occurs at positions 221, 231, and 238. Lysine 243 carries the post-translational modification N6-acetyllysine. Residue 263-267 (DTWIS) coordinates L-ornithine. N6-succinyllysine occurs at positions 274 and 289. Lysine 292 carries the post-translational modification N6-acetyllysine; alternate. An N6-succinyllysine; alternate modification is found at lysine 292. Position 302 to 305 (302 to 305 (HCLP)) interacts with L-ornithine. Cysteine 303 is an active-site residue. Lysine 307 bears the N6-acetyllysine; alternate mark. Lysine 307 is subject to N6-succinyllysine; alternate. Arginine 330 is a carbamoyl phosphate binding site. Arginine 330 lines the L-ornithine pocket.

Belongs to the aspartate/ornithine carbamoyltransferase superfamily. OTCase family. In terms of assembly, homotrimer. In terms of processing, acetylation at Lys-88 negatively regulates ornithine carbamoyltransferase activity in response to nutrient signals.

It localises to the mitochondrion matrix. The enzyme catalyses carbamoyl phosphate + L-ornithine = L-citrulline + phosphate + H(+). It functions in the pathway nitrogen metabolism; urea cycle; L-citrulline from L-ornithine and carbamoyl phosphate: step 1/1. Negatively regulated by lysine acetylation. Catalyzes the second step of the urea cycle, the condensation of carbamoyl phosphate with L-ornithine to form L-citrulline. The urea cycle ensures the detoxification of ammonia by converting it to urea for excretion. The chain is Ornithine transcarbamylase, mitochondrial from Mus musculus (Mouse).